Here is an 811-residue protein sequence, read N- to C-terminus: Leucine--tRNA ligase (811 aa).

The 'HIGH' region motif lies at 40–50; that stretch reads PYPSGRLHMGH. The 'KMSKS' region signature appears at 579–583; sequence KMSKS. An ATP-binding site is contributed by Lys582.

The protein belongs to the class-I aminoacyl-tRNA synthetase family.

It is found in the cytoplasm. The enzyme catalyses tRNA(Leu) + L-leucine + ATP = L-leucyl-tRNA(Leu) + AMP + diphosphate. The sequence is that of Leucine--tRNA ligase from Campylobacter fetus subsp. fetus (strain 82-40).